Consider the following 389-residue polypeptide: Glutamate 5-kinase (389 aa).

Lys-16 contacts ATP. 3 residues coordinate substrate: Ser-56, Asp-143, and Asn-155. 175–176 is a binding site for ATP; it reads SD. The 78-residue stretch at 281–358 folds into the PUA domain; the sequence is AGELHVDEGA…AEIEAILGYA (78 aa).

This sequence belongs to the glutamate 5-kinase family.

It is found in the cytoplasm. It carries out the reaction L-glutamate + ATP = L-glutamyl 5-phosphate + ADP. The protein operates within amino-acid biosynthesis; L-proline biosynthesis; L-glutamate 5-semialdehyde from L-glutamate: step 1/2. In terms of biological role, catalyzes the transfer of a phosphate group to glutamate to form L-glutamate 5-phosphate. The sequence is that of Glutamate 5-kinase from Rhizobium etli (strain ATCC 51251 / DSM 11541 / JCM 21823 / NBRC 15573 / CFN 42).